We begin with the raw amino-acid sequence, 191 residues long: uncharacterized protein (191 aa).

This is an uncharacterized protein from Acanthamoeba polyphaga (Amoeba).